Consider the following 227-residue polypeptide: Ubiquitin domain-containing protein 1 (227 aa).

The tract at residues 1–36 (MGNCVGRQRRERPTAPGHPRKRAGRNEPLKKERLKW) is disordered. The span at 24-36 (GRNEPLKKERLKW) shows a compositional bias: basic and acidic residues. In terms of domain architecture, Ubiquitin-like spans 149-224 (FPLKVRLSTG…IQVIINQPPP (76 aa)).

In terms of assembly, interacts with UBTD1.

Functionally, may be involved in the regulation of cellular senescence through a positive feedback loop with TP53. Is a TP53 downstream target gene that increases the stability of TP53 protein by promoting the ubiquitination and degradation of MDM2. This is Ubiquitin domain-containing protein 1 (UBTD1) from Bos taurus (Bovine).